The primary structure comprises 142 residues: Small ribosomal subunit protein uS11c (142 aa).

It belongs to the universal ribosomal protein uS11 family. In terms of assembly, part of the 30S ribosomal subunit.

The protein resides in the plastid. The protein localises to the chloroplast. The protein is Small ribosomal subunit protein uS11c of Welwitschia mirabilis (Tree tumbo).